Consider the following 314-residue polypeptide: Probable cell division protein WhiA (314 aa).

The H-T-H motif DNA-binding region spans 277–311 (TLKELGEKMPSGAISKSGINHRLRKLNQLAEGYQQ).

This sequence belongs to the WhiA family.

In terms of biological role, involved in cell division and chromosome segregation. In Latilactobacillus sakei subsp. sakei (strain 23K) (Lactobacillus sakei subsp. sakei), this protein is Probable cell division protein WhiA.